A 343-amino-acid chain; its full sequence is UDP-3-O-acylglucosamine N-acyltransferase 2 (343 aa).

Residue histidine 251 is the Proton acceptor of the active site.

It belongs to the transferase hexapeptide repeat family. LpxD subfamily. As to quaternary structure, homotrimer.

It catalyses the reaction a UDP-3-O-[(3R)-3-hydroxyacyl]-alpha-D-glucosamine + a (3R)-hydroxyacyl-[ACP] = a UDP-2-N,3-O-bis[(3R)-3-hydroxyacyl]-alpha-D-glucosamine + holo-[ACP] + H(+). It functions in the pathway bacterial outer membrane biogenesis; LPS lipid A biosynthesis. Its function is as follows. Catalyzes the N-acylation of UDP-3-O-acylglucosamine using 3-hydroxyacyl-ACP as the acyl donor. Is involved in the biosynthesis of lipid A, a phosphorylated glycolipid that anchors the lipopolysaccharide to the outer membrane of the cell. The chain is UDP-3-O-acylglucosamine N-acyltransferase 2 from Legionella pneumophila (strain Paris).